The chain runs to 172 residues: Protein-export protein SecB (172 aa).

The protein belongs to the SecB family. As to quaternary structure, homotetramer, a dimer of dimers. One homotetramer interacts with 1 SecA dimer.

The protein resides in the cytoplasm. One of the proteins required for the normal export of preproteins out of the cell cytoplasm. It is a molecular chaperone that binds to a subset of precursor proteins, maintaining them in a translocation-competent state. It also specifically binds to its receptor SecA. The polypeptide is Protein-export protein SecB (Haemophilus ducreyi (strain 35000HP / ATCC 700724)).